A 321-amino-acid polypeptide reads, in one-letter code: Beta-lactamase (321 aa).

An N-terminal signal peptide occupies residues 1–30 (MEKNRKKQIVVLSIALVCIFILVFSLFHKS). Residue serine 83 is the Acyl-ester intermediate of the active site. A substrate-binding site is contributed by 233–235 (KTG).

This sequence belongs to the class-A beta-lactamase family.

The catalysed reaction is a beta-lactam + H2O = a substituted beta-amino acid. Its activity is regulated as follows. Inhibited by clavulanic acid. Can hydrolyze cephalosporins, penicillins and also cefoxitin; but at a slow rate. In Phocaeicola vulgatus (Bacteroides vulgatus), this protein is Beta-lactamase (cfxA).